A 363-amino-acid chain; its full sequence is Adenosine deaminase (363 aa).

Zn(2+) is bound by residues His-42 and His-44. A purine D-ribonucleoside-binding positions include His-44–Asp-46, Asp-172, and Gly-201. The tract at residues Ile-170 to Ala-184 is gating helix loop; regulates binding affinity for substrates and thus substrate selectivity. His-226 is a Zn(2+) binding site. The a purine D-ribonucleoside site is built by Glu-229, His-253, and Asp-310. Zn(2+) is bound at residue Asp-310.

This sequence belongs to the metallo-dependent hydrolases superfamily. Adenosine and AMP deaminases family. Zn(2+) is required as a cofactor.

The enzyme catalyses adenosine + H2O + H(+) = inosine + NH4(+). It carries out the reaction S-methyl-5'-thioadenosine + H2O + H(+) = S-methyl-5'-thioinosine + NH4(+). It participates in purine metabolism; purine nucleoside salvage. With respect to regulation, inhibited by coformycin and methylthiocoformycin (MT-coformycin). Its function is as follows. Catalyzes the hydrolytic deamination of adenosine to produce inosine. Unlike mammalian adenosine deaminases, also catalyzes the deamination of 5'-methylthioadenosine (MTA), a by-product of polyamine biosynthesis, to produce 5'-methylthioinosine (MTI). Plays an essential role in the purine salvage pathway which allows the parasite to use host cell purines for the synthesis of nucleic acids. This chain is Adenosine deaminase, found in Plasmodium vivax (strain Salvador I).